Reading from the N-terminus, the 652-residue chain is Putative enzymatic polyprotein (652 aa).

The Peptidase A2 domain occupies 21 to 99 (YHGLFDTGAN…SPDIIIGATF (79 aa)). Aspartate 26 is a catalytic residue. Residues 231–413 (FIEEKTNFED…EKIDFLGVQI (183 aa)) form the Reverse transcriptase domain. The Mg(2+) site is built by aspartate 301, aspartate 364, and aspartate 365.

The enzyme catalyses DNA(n) + a 2'-deoxyribonucleoside 5'-triphosphate = DNA(n+1) + diphosphate. The catalysed reaction is Endonucleolytic cleavage to 5'-phosphomonoester.. Its function is as follows. Encodes for at least two polypeptides: protease (PR) and reverse transcriptase (RT). The protease processes the polyprotein in cis. Reverse transcriptase is multifunctional enzyme that converts the viral RNA genome into dsDNA in viral cytoplasmic capsids. This enzyme displays a DNA polymerase activity that can copy either DNA or RNA templates, and a ribonuclease H (RNase H) activity that cleaves the RNA strand of RNA-DNA heteroduplexes in a partially processive 3'- to 5'-endonucleasic mode. Neo-synthesized pregenomic RNA (pgRNA) are encapsidated, and reverse-transcribed inside the nucleocapsid. Partial (+)DNA is synthesized from the (-)DNA template and generates the relaxed circular DNA (RC-DNA) genome. After budding and infection, the RC-DNA migrates in the nucleus, and is converted into a plasmid-like covalently closed circular DNA (cccDNA). In Cassava vein mosaic virus (CsVMV), this protein is Putative enzymatic polyprotein.